Reading from the N-terminus, the 269-residue chain is Dermonecrotic toxin SpeSicTox-betaIB3 (269 aa).

The active site involves His5. Glu25 and Asp27 together coordinate Mg(2+). Catalysis depends on His41, which acts as the Nucleophile. 2 disulfide bridges follow: Cys45–Cys51 and Cys47–Cys191. Residue Asp85 participates in Mg(2+) binding.

Belongs to the arthropod phospholipase D family. Class II subfamily. It depends on Mg(2+) as a cofactor. In terms of tissue distribution, expressed by the venom gland.

Its subcellular location is the secreted. It carries out the reaction an N-(acyl)-sphingosylphosphocholine = an N-(acyl)-sphingosyl-1,3-cyclic phosphate + choline. The enzyme catalyses an N-(acyl)-sphingosylphosphoethanolamine = an N-(acyl)-sphingosyl-1,3-cyclic phosphate + ethanolamine. It catalyses the reaction a 1-acyl-sn-glycero-3-phosphocholine = a 1-acyl-sn-glycero-2,3-cyclic phosphate + choline. The catalysed reaction is a 1-acyl-sn-glycero-3-phosphoethanolamine = a 1-acyl-sn-glycero-2,3-cyclic phosphate + ethanolamine. Dermonecrotic toxins cleave the phosphodiester linkage between the phosphate and headgroup of certain phospholipids (sphingolipid and lysolipid substrates), forming an alcohol (often choline) and a cyclic phosphate. This toxin acts on sphingomyelin (SM). It may also act on ceramide phosphoethanolamine (CPE), lysophosphatidylcholine (LPC) and lysophosphatidylethanolamine (LPE), but not on lysophosphatidylserine (LPS), and lysophosphatidylglycerol (LPG). It acts by transphosphatidylation, releasing exclusively cyclic phosphate products as second products. Induces dermonecrosis, hemolysis, increased vascular permeability, edema, inflammatory response, and platelet aggregation. This Sicarius peruensis (Six-eyed sand spider) protein is Dermonecrotic toxin SpeSicTox-betaIB3.